An 876-amino-acid polypeptide reads, in one-letter code: Valine--tRNA ligase (876 aa).

A 'HIGH' region motif is present at residues 44-54; that stretch reads PNVTGKLHLGH. Residues 520-524 carry the 'KMSKS' region motif; that stretch reads KMSKS. Lys-523 lines the ATP pocket. Residues 805–876 are a coiled coil; that stretch reads LEGLIDMDKE…VKARIEQLKA (72 aa).

This sequence belongs to the class-I aminoacyl-tRNA synthetase family. ValS type 1 subfamily. Monomer.

It is found in the cytoplasm. It carries out the reaction tRNA(Val) + L-valine + ATP = L-valyl-tRNA(Val) + AMP + diphosphate. In terms of biological role, catalyzes the attachment of valine to tRNA(Val). As ValRS can inadvertently accommodate and process structurally similar amino acids such as threonine, to avoid such errors, it has a 'posttransfer' editing activity that hydrolyzes mischarged Thr-tRNA(Val) in a tRNA-dependent manner. This chain is Valine--tRNA ligase, found in Staphylococcus aureus (strain Mu3 / ATCC 700698).